An 812-amino-acid chain; its full sequence is ATP-dependent zinc metalloprotease FtsH (812 aa).

At 1–21 (MPPSPPRPPKFPGSGRPESPN) the chain is on the cytoplasmic side. A helical membrane pass occupies residues 22 to 42 (WGVWVMVLLIVGVLAFGFFTP). Residues 43–241 (ESFGLGPRKE…TKFKRESGSW (199 aa)) are Extracellular-facing. The helical transmembrane segment at 242–262 (GGILLNLLPIVLILVILFFMF) threads the bilayer. Over 263–812 (RAQSGGARGA…EFGKDGGEKK (550 aa)) the chain is Cytoplasmic. Position 333–340 (333–340 (GAPGTGKT)) interacts with ATP. Zn(2+) is bound at residue His-555. Residue Glu-556 is part of the active site. His-559 and Asp-631 together coordinate Zn(2+). Residues 739-812 (KNPPARVTPP…EFGKDGGEKK (74 aa)) form a disordered region. Composition is skewed to basic and acidic residues over residues 757–785 (QPGKDDSGHNEKKEAEETRADGAEERKME) and 803–812 (EFGKDGGEKK).

In the central section; belongs to the AAA ATPase family. The protein in the C-terminal section; belongs to the peptidase M41 family. As to quaternary structure, homohexamer. Zn(2+) is required as a cofactor.

It is found in the cell membrane. Its function is as follows. Acts as a processive, ATP-dependent zinc metallopeptidase for both cytoplasmic and membrane proteins. Plays a role in the quality control of integral membrane proteins. The polypeptide is ATP-dependent zinc metalloprotease FtsH (Akkermansia muciniphila (strain ATCC BAA-835 / DSM 22959 / JCM 33894 / BCRC 81048 / CCUG 64013 / CIP 107961 / Muc)).